We begin with the raw amino-acid sequence, 156 residues long: Small ribosomal subunit protein uS7 (156 aa).

It belongs to the universal ribosomal protein uS7 family. In terms of assembly, part of the 30S ribosomal subunit. Contacts proteins S9 and S11.

Its function is as follows. One of the primary rRNA binding proteins, it binds directly to 16S rRNA where it nucleates assembly of the head domain of the 30S subunit. Is located at the subunit interface close to the decoding center, probably blocks exit of the E-site tRNA. The polypeptide is Small ribosomal subunit protein uS7 (Histophilus somni (strain 129Pt) (Haemophilus somnus)).